Reading from the N-terminus, the 454-residue chain is Gustatory and odorant receptor 21a (454 aa).

Over 1-114 (MTFLDRTMSF…LPRTGYSWGS (114 aa)) the chain is Cytoplasmic. The chain crosses the membrane as a helical span at residues 115 to 135 (KQVMWAIFIYSCQTTIVVLVL). The Extracellular segment spans residues 136 to 153 (RERVKKFVTSPDKRFDEA). Residues 154–174 (IYNVIFISLLFTNFLLPVASW) form a helical membrane-spanning segment. The Cytoplasmic segment spans residues 175-206 (RHGPQVAIFKNMWTNYQYKFFKTTGSPIVFPN). A helical membrane pass occupies residues 207–227 (LYPLTWSLCVFSWLLSIAINL). At 228 to 237 (SQYFLQPDFR) the chain is on the extracellular side. The chain crosses the membrane as a helical span at residues 238 to 258 (LWYTFAYYPIIAMLNCFCSLW). Topologically, residues 259–312 (YINCNAFGTASRALSDALQTTIRGEKPAQKLTEYRHLWVDLSHMMQQLGRAYSN) are cytoplasmic. Residues 313-333 (MYGMYCLVIFFTTIIATYGSI) form a helical membrane-spanning segment. Residues 334–345 (SEIIDHGATYKE) lie on the Extracellular side of the membrane. The chain crosses the membrane as a helical span at residues 346 to 366 (VGLFVIVFYCMGLLYIICNEA). Residues 367–422 (HYASRKVGLDFQTKLLNINLTAVDAATQKEVEMLLVAINKNPPIMNLDGYANINRE) lie on the Cytoplasmic side of the membrane. A helical transmembrane segment spans residues 423-443 (LITTNISFMATYLVVLLQFKI). Residues 444–454 (TEQRRIGQQQA) are Extracellular-facing.

Belongs to the insect chemoreceptor superfamily. Gustatory receptor (GR) family. Gr21a subfamily. As to quaternary structure, gr21a and Gr63a probably form a heterodimer that responds to CO(2). In terms of tissue distribution, expressed in the adult labellar chemosensory neurons. Carbon dioxide-responsive neurons coexpress Gr21a and Gr63a in a pair of chemosensory receptors at both larval and adult life stages. A single bilateral neuron, expressing the Gr21a receptor, is responsible for CO(2) detection in larvae.

The protein localises to the cell membrane. Its function is as follows. Gustatory and odorant receptor which mediates acceptance or avoidance behavior, depending on its substrates. Gr21a and Gr63a together are sufficient for carbon dioxide detection and avoidance behavior. It is possible that the CO(2) receptors Gr63a and Gr21a activate the TRPC channels through Galpha49B and Plc21C. This innate olfactory avoidance behavior can be inhibited by inhibitory interactions of the odors such as 1-hexanol and 2,3-butanedione with Gr21a and Gr63a. The protein is Gustatory and odorant receptor 21a (Gr21a) of Drosophila melanogaster (Fruit fly).